The primary structure comprises 234 residues: Staphylococcal superantigen-like 5 (234 aa).

An N-terminal signal peptide occupies residues 1–30; sequence MKMTAIAKASLALGILATGTITSLHQTVNA.

Belongs to the staphylococcal/streptococcal toxin family. Interacts with host SELPLG; this interaction prevents SELPLG-mediated neutrophil rolling. Interacts with host MMP9 (via sialic acid-containing O-glycans); this interaction inhibits MMP9 activity. Interacts with host GP1BA and GP6; these interactions play an important role in platelet binding and activation.

Its function is as follows. Secreted protein that plays a role in the inhibition of host innate immune system. Modulates the interaction between host SELPLG and P-selectin thereby preventing initial rolling of neutrophils toward the site of infection. Interferes with leukocyte trafficking by inhibiting host metalloproteinase-9/MMP9 activity. Also associates with two different platelet surface receptors GP1A and GP6 leading to platelet activation and aggregation. This Staphylococcus aureus (strain NCTC 8325 / PS 47) protein is Staphylococcal superantigen-like 5.